Consider the following 689-residue polypeptide: Putative ATP-dependent helicase IRC3 (689 aa).

The region spanning 46–211 is the Helicase ATP-binding domain; that stretch reads NSIRQGTKRI…SMVMDKIVYH (166 aa). Residue 59–66 coordinates ATP; that stretch reads LATGGGKT. A DEAH box motif is present at residues 158–161; the sequence is DEAH. The region spanning 265-438 is the Helicase C-terminal domain; the sequence is ILKTYLHKKQ…KIDERLRALF (174 aa).

It belongs to the helicase family. IRC3 subfamily.

The protein localises to the mitochondrion. The protein is Putative ATP-dependent helicase IRC3 (IRC3) of Saccharomyces cerevisiae (strain ATCC 204508 / S288c) (Baker's yeast).